A 367-amino-acid chain; its full sequence is Heme A synthase (367 aa).

5 helical membrane passes run 25–45 (ALRFWLGFVLLALFCLVLVGG), 111–131 (LIARAIGVIFALPLIYFWLTG), 139–159 (WPLVGILALGGLQGGIGWWMV), 174–194 (LATHLVMACLIFAGCMWIMRG), and 210–230 (GFAAAIAIFSLFQIYLGALVA). A heme-binding site is contributed by His-274. Helical transmembrane passes span 276 to 296 (IGAYTLFALTLINMVIALRAA), 305 to 325 (AILLFVLVTLQAAIGIATLLM), and 327 to 347 (VPLHWGLLHQAGALVVFGFAV). Residue His-335 coordinates heme.

It belongs to the COX15/CtaA family. Type 2 subfamily. Interacts with CtaB. Heme b is required as a cofactor.

It localises to the cell membrane. The enzyme catalyses Fe(II)-heme o + 2 A + H2O = Fe(II)-heme a + 2 AH2. Its pathway is porphyrin-containing compound metabolism; heme A biosynthesis; heme A from heme O: step 1/1. Functionally, catalyzes the conversion of heme O to heme A by two successive hydroxylations of the methyl group at C8. The first hydroxylation forms heme I, the second hydroxylation results in an unstable dihydroxymethyl group, which spontaneously dehydrates, resulting in the formyl group of heme A. The chain is Heme A synthase from Rhizobium johnstonii (strain DSM 114642 / LMG 32736 / 3841) (Rhizobium leguminosarum bv. viciae).